A 74-amino-acid chain; its full sequence is Large ribosomal subunit protein bL27c (74 aa).

It belongs to the bacterial ribosomal protein bL27 family.

It is found in the plastid. The protein resides in the chloroplast. The protein is Large ribosomal subunit protein bL27c (rpl27) of Pleurochrysis haptonemofera (Unicellular marine alga).